A 656-amino-acid polypeptide reads, in one-letter code: uncharacterized protein (656 aa).

The segment at 623 to 656 (EIDIPGTPASIDPEWSRPPGSITDDHVFDAPLHR) is disordered. A compositionally biased stretch (basic and acidic residues) spans 645 to 656 (TDDHVFDAPLHR).

This is an uncharacterized protein from Mycobacterium tuberculosis (strain CDC 1551 / Oshkosh).